The chain runs to 89 residues: Cell division protein FtsL (89 aa).

Topologically, residues 1–22 (MIDRKHYHLVGSIGKDILNNGK) are cytoplasmic. The chain crosses the membrane as a helical span at residues 23 to 40 (LPALLLIAVLASSSLVVI). Topologically, residues 41–89 (TTYQTRRLTVEREQLLLEQNILDIEWRNLILEDNVISDQSRFEFVATEQ) are periplasmic.

It belongs to the FtsL family. Part of a complex composed of FtsB, FtsL and FtsQ.

It localises to the cell inner membrane. Its function is as follows. Essential cell division protein. May link together the upstream cell division proteins, which are predominantly cytoplasmic, with the downstream cell division proteins, which are predominantly periplasmic. This chain is Cell division protein FtsL, found in Moranella endobia (strain PCIT).